The sequence spans 229 residues: DNA repair protein RecO (229 aa).

It belongs to the RecO family.

Its function is as follows. Involved in DNA repair and RecF pathway recombination. In Pseudomonas fluorescens (strain ATCC BAA-477 / NRRL B-23932 / Pf-5), this protein is DNA repair protein RecO.